The following is a 179-amino-acid chain: DELTA-actitoxin-Afr1a (179 aa).

The segment at 1–29 is N-terminal alpha-helix that contributes to the pore; the sequence is SADVAGAVIDGAGLGFDVLKTVLEALGNV. Position 31 (R31) interacts with an N-(acyl)-sphingosylphosphocholine. 2 residues coordinate N-acetyl-D-glucosamine 6-sulfate: Y51 and R53. An N-(acyl)-sphingosylphosphocholine is bound by residues R53, S54, R79, G85, Y108, Y113, S114, W116, Y133, Y137, Y138, R144, and G168. Residues 105-120 are trp-rich region, which is important for the binding to lipid membrane; that stretch reads SVPYDYNWYSNWWNVR. Residue Y138 coordinates N-acetyl-D-glucosamine 6-sulfate. Positions 144–146 match the Cell attachment site, crucial for protein stability motif; that stretch reads RGD.

Belongs to the actinoporin family. Sea anemone subfamily. In terms of assembly, octamer or nonamer in membranes. Monomer in the soluble state.

The protein localises to the secreted. Its subcellular location is the nematocyst. The protein resides in the target cell membrane. Its function is as follows. Pore-forming toxin (PFT) that consists of a crown-shaped octamer or nonamer that forms cation-selective hydrophilic pores of about 1.5 nm (inside) and 13 nm (outside). It causes cardiac stimulation and cytolysis (EC(50)=1.6 nM on erythrocytes). Interestingly, the Phe-16 is crucial for hemolysis. Pore formation is a multi-step process that involves specific recognition of membrane sphingomyelin (but neither cholesterol nor phosphatidylcholine) using aromatic rich region and adjacent phosphocholine (POC) binding site, firm binding to the membrane (mainly driven by hydrophobic interactions) accompanied by the transfer of the N-terminal region to the lipid-water interface and finally pore formation after oligomerization of monomers. It is probable that a dimeric form is an assembly intermediate before the complete oligomerization. The formation of stable pores occurs only in vesicles composed of DOPC/SM (there is no oligomerization when the PFT is treated with vesicles of DOPC or SM alone). The transmembrane pore displays 8 lateral perforations, one at each subunit-subunit interface, partially occupied by the acyl-chain region of a bridging lipid. Each pore contains 24 lipid molecules, firmly bound to each subunit, that is, 3 lipids (L1, L2, L3, L4 and/or L5) are associated to each subunit. Lipid L1 bridges 2 subunits, whereas lipids L2 and L3 bind to sites at single subunit. This is DELTA-actitoxin-Afr1a from Actinia fragacea (Strawberry anemone).